The primary structure comprises 315 residues: Ribosomal RNA small subunit methyltransferase H (315 aa).

Residues 35–37, Asp-55, Phe-79, Asp-101, and Gln-108 contribute to the S-adenosyl-L-methionine site; that span reads GGH.

The protein belongs to the methyltransferase superfamily. RsmH family.

The protein resides in the cytoplasm. It carries out the reaction cytidine(1402) in 16S rRNA + S-adenosyl-L-methionine = N(4)-methylcytidine(1402) in 16S rRNA + S-adenosyl-L-homocysteine + H(+). Its function is as follows. Specifically methylates the N4 position of cytidine in position 1402 (C1402) of 16S rRNA. The chain is Ribosomal RNA small subunit methyltransferase H from Sodalis glossinidius (strain morsitans).